Reading from the N-terminus, the 313-residue chain is MSFSKEVKEEITKQMNNARHCRLAEIAALLSACGHVIQKDGEIKSIVLQTENILVARKYFTLLKKTFNINTEILIRKNKAGKNSLLFLLVVKLPKQVSLLYQATKLSLHHELGDKALVVDPIVVQNTCCKRAFVRGLFLAAGSMSDPEKTYHYEIVFPDLERASQLQEIINSFLIDAKIVLRKKYYVVYVKEGSQIVDLLNIMEAHTSLMDFENVRILKEMRNSINRQVNCEAANINKTVTAAAKQIDDILFIRDTIGFDNLTEGLEEIAELRISYPESSLKELGAMLNPPIGKSGVNHRLKKLCSIADGLRQ.

The segment at residues 280-313 (SLKELGAMLNPPIGKSGVNHRLKKLCSIADGLRQ) is a DNA-binding region (H-T-H motif).

The protein belongs to the WhiA family.

In terms of biological role, involved in cell division and chromosome segregation. The chain is Probable cell division protein WhiA from Lachnoclostridium phytofermentans (strain ATCC 700394 / DSM 18823 / ISDg) (Clostridium phytofermentans).